A 291-amino-acid chain; its full sequence is Oligopeptide transport system permease protein OppC (291 aa).

Transmembrane regions (helical) follow at residues Val22–Leu42, Met85–Ile105, Thr116–Val136, Asn142–Ser162, Ala209–Ile229, and Ala247–Cys267. The region spanning Met81–Gly272 is the ABC transmembrane type-1 domain.

It belongs to the binding-protein-dependent transport system permease family. OppBC subfamily. As to quaternary structure, the complex is composed of an ATP-binding protein (OppD), two transmembrane proteins (OppB and OppC) and a solute-binding protein (OppA).

Its subcellular location is the cell inner membrane. Functionally, part of the ABC transporter complex OppABCD involved in the uptake of oligopeptides. Responsible for the translocation of the substrate across the membrane. The polypeptide is Oligopeptide transport system permease protein OppC (Mycobacterium bovis (strain ATCC BAA-935 / AF2122/97)).